Consider the following 340-residue polypeptide: Protein-arginine kinase (340 aa).

Residues 21 to 242 (VVLSSRIRLA…EQIIMQERVA (222 aa)) enclose the Phosphagen kinase C-terminal domain. ATP-binding positions include 24–28 (SSRIR), H79, R113, 164–168 (RASVM), and 195–200 (RGIYGE).

Belongs to the ATP:guanido phosphotransferase family.

It carries out the reaction L-arginyl-[protein] + ATP = N(omega)-phospho-L-arginyl-[protein] + ADP + H(+). Catalyzes the specific phosphorylation of arginine residues in proteins. This is Protein-arginine kinase from Listeria monocytogenes serovar 1/2a (strain ATCC BAA-679 / EGD-e).